We begin with the raw amino-acid sequence, 87 residues long: Large ribosomal subunit protein bL31B (87 aa).

It belongs to the bacterial ribosomal protein bL31 family. Type B subfamily. In terms of assembly, part of the 50S ribosomal subunit.

The polypeptide is Large ribosomal subunit protein bL31B (Escherichia coli O8 (strain IAI1)).